Reading from the N-terminus, the 430-residue chain is tRNA(Ile)-lysidine synthase (430 aa).

21 to 26 (SGGLDS) contributes to the ATP binding site.

This sequence belongs to the tRNA(Ile)-lysidine synthase family.

The protein resides in the cytoplasm. It carries out the reaction cytidine(34) in tRNA(Ile2) + L-lysine + ATP = lysidine(34) in tRNA(Ile2) + AMP + diphosphate + H(+). In terms of biological role, ligates lysine onto the cytidine present at position 34 of the AUA codon-specific tRNA(Ile) that contains the anticodon CAU, in an ATP-dependent manner. Cytidine is converted to lysidine, thus changing the amino acid specificity of the tRNA from methionine to isoleucine. In Salmonella heidelberg (strain SL476), this protein is tRNA(Ile)-lysidine synthase.